We begin with the raw amino-acid sequence, 433 residues long: Protein translocase subunit SecY (433 aa).

Transmembrane regions (helical) follow at residues 17-37 (IIFT…PIAG), 71-91 (IFAL…LMSV), 117-137 (LTVL…ESIV), 141-161 (GPVV…TLVV), 184-204 (LIIF…MFEL), 212-232 (PLVA…IIFF), 268-288 (GVIP…LANF), 309-329 (IYIL…TAIV), 366-386 (LTVV…LLMN), and 388-408 (YVIS…VVLD).

The protein belongs to the SecY/SEC61-alpha family. As to quaternary structure, component of the Sec protein translocase complex. Heterotrimer consisting of SecY, SecE and SecG subunits. The heterotrimers can form oligomers, although 1 heterotrimer is thought to be able to translocate proteins. Interacts with the ribosome. Interacts with SecDF, and other proteins may be involved. Interacts with SecA.

The protein resides in the cell inner membrane. Functionally, the central subunit of the protein translocation channel SecYEG. Consists of two halves formed by TMs 1-5 and 6-10. These two domains form a lateral gate at the front which open onto the bilayer between TMs 2 and 7, and are clamped together by SecE at the back. The channel is closed by both a pore ring composed of hydrophobic SecY resides and a short helix (helix 2A) on the extracellular side of the membrane which forms a plug. The plug probably moves laterally to allow the channel to open. The ring and the pore may move independently. The chain is Protein translocase subunit SecY from Rickettsia bellii (strain RML369-C).